A 41-amino-acid chain; its full sequence is Photosystem II reaction center protein L (41 aa).

Residues 20–40 form a helical membrane-spanning segment; sequence SLYLGLLLVFVVGILFSSYFF.

This sequence belongs to the PsbL family. In terms of assembly, PSII is composed of 1 copy each of membrane proteins PsbA, PsbB, PsbC, PsbD, PsbE, PsbF, PsbH, PsbI, PsbJ, PsbK, PsbL, PsbM, PsbT, PsbX, PsbY, PsbZ, Psb30/Ycf12, peripheral proteins PsbO, CyanoQ (PsbQ), PsbU, PsbV and a large number of cofactors. It forms dimeric complexes.

It is found in the cellular thylakoid membrane. In terms of biological role, one of the components of the core complex of photosystem II (PSII). PSII is a light-driven water:plastoquinone oxidoreductase that uses light energy to abstract electrons from H(2)O, generating O(2) and a proton gradient subsequently used for ATP formation. It consists of a core antenna complex that captures photons, and an electron transfer chain that converts photonic excitation into a charge separation. This subunit is found at the monomer-monomer interface and is required for correct PSII assembly and/or dimerization. The sequence is that of Photosystem II reaction center protein L from Trichodesmium erythraeum (strain IMS101).